Consider the following 78-residue polypeptide: Defensin-like protein 281 (78 aa).

Residues 1 to 23 (MASTKYLVLLFICLSVLLTPGLG) form the signal peptide. Intrachain disulfides connect Cys37–Cys60, Cys46–Cys72, and Cys50–Cys74.

The protein belongs to the DEFL family.

The protein localises to the secreted. This is Defensin-like protein 281 from Arabidopsis thaliana (Mouse-ear cress).